A 183-amino-acid chain; its full sequence is Peptide deformylase (183 aa).

The Fe cation site is built by C111 and H154. The active site involves E155. H158 lines the Fe cation pocket.

This sequence belongs to the polypeptide deformylase family. The cofactor is Fe(2+).

It catalyses the reaction N-terminal N-formyl-L-methionyl-[peptide] + H2O = N-terminal L-methionyl-[peptide] + formate. Functionally, removes the formyl group from the N-terminal Met of newly synthesized proteins. Requires at least a dipeptide for an efficient rate of reaction. N-terminal L-methionine is a prerequisite for activity but the enzyme has broad specificity at other positions. This is Peptide deformylase from Staphylococcus epidermidis (strain ATCC 35984 / DSM 28319 / BCRC 17069 / CCUG 31568 / BM 3577 / RP62A).